Here is a 352-residue protein sequence, read N- to C-terminus: MDELKQPPHANRGVVIVKEKNEAVESPLVSMVDYIRVSFKTHDVDRIIEEVLHLSKDFMTEKQSGFYGYVGTYELDYIKVFYSAPDDNRGVLIEMSGQGCRQFESFLECRKKTWYDFFQDCMQQGGSFTRFDLAIDDKKTYFSIPELLKKAQKGECISRFRKSDFNGSFDLSDGITGGTTIYFGSKKSEAYLCFYEKNYEQAEKYNIPLEELGDWNRYELRLKNERAQVAIDALLKTKDLTLIAMQIINNYVRFVDADENITREHWKTSLFWSDFIGDVGRLPLYVKPQKDFYQKSRNWLRNSCAPTMKMVLEADEHLGKTDLSDMIAEAELADKHKKMLDVYMADVADMVV.

This sequence belongs to the plasmid replication initiation factor family.

Functionally, probable DNA relaxase involved in the transfer of the integrative and conjugative element ICEBs1. Required for the transfer of ICEBs1. Probably mediates conjugation of ICEBs1 by nicking at oriT on the conjugative element and facilitates the translocation of a single strand of ICEBs1 DNA through a transmembrane conjugation pore into the recipient cell. In Bacillus subtilis (strain 168), this protein is Putative DNA relaxase NicK (nicK).